The following is a 148-amino-acid chain: UPF0756 membrane protein ESA_02180 (148 aa).

The next 4 helical transmembrane spans lie at 4-24 (ITLL…NMAV), 51-71 (VTVG…SGTL), 86-106 (LVAI…VALM), and 112-132 (IVAG…GVPV).

It belongs to the UPF0756 family.

The protein localises to the cell membrane. The polypeptide is UPF0756 membrane protein ESA_02180 (Cronobacter sakazakii (strain ATCC BAA-894) (Enterobacter sakazakii)).